We begin with the raw amino-acid sequence, 217 residues long: Protein-L-isoaspartate O-methyltransferase (217 aa).

The active site involves Ser-64.

Belongs to the methyltransferase superfamily. L-isoaspartyl/D-aspartyl protein methyltransferase family.

Its subcellular location is the cytoplasm. The enzyme catalyses [protein]-L-isoaspartate + S-adenosyl-L-methionine = [protein]-L-isoaspartate alpha-methyl ester + S-adenosyl-L-homocysteine. Functionally, catalyzes the methyl esterification of L-isoaspartyl residues in peptides and proteins that result from spontaneous decomposition of normal L-aspartyl and L-asparaginyl residues. It plays a role in the repair and/or degradation of damaged proteins. The protein is Protein-L-isoaspartate O-methyltransferase of Azorhizobium caulinodans (strain ATCC 43989 / DSM 5975 / JCM 20966 / LMG 6465 / NBRC 14845 / NCIMB 13405 / ORS 571).